The following is a 387-amino-acid chain: S-adenosylmethionine synthase (387 aa).

Histidine 16 is an ATP binding site. Aspartate 18 is a Mg(2+) binding site. Glutamate 44 contacts K(+). The L-methionine site is built by glutamate 57 and glutamine 100. Residues 100 to 110 (QSADIAVGVDE) form a flexible loop region. Residues 165–167 (DAK), aspartate 241, 247–248 (RK), alanine 264, and lysine 268 each bind ATP. L-methionine is bound at residue aspartate 241. Lysine 272 lines the L-methionine pocket.

Belongs to the AdoMet synthase family. Homotetramer; dimer of dimers. Requires Mg(2+) as cofactor. K(+) serves as cofactor.

It is found in the cytoplasm. The catalysed reaction is L-methionine + ATP + H2O = S-adenosyl-L-methionine + phosphate + diphosphate. It participates in amino-acid biosynthesis; S-adenosyl-L-methionine biosynthesis; S-adenosyl-L-methionine from L-methionine: step 1/1. Functionally, catalyzes the formation of S-adenosylmethionine (AdoMet) from methionine and ATP. The overall synthetic reaction is composed of two sequential steps, AdoMet formation and the subsequent tripolyphosphate hydrolysis which occurs prior to release of AdoMet from the enzyme. The sequence is that of S-adenosylmethionine synthase from Marinomonas sp. (strain MWYL1).